The sequence spans 117 residues: Flagellar transcriptional regulator FlhD (117 aa).

It belongs to the FlhD family. In terms of assembly, homodimer; disulfide-linked. Forms a heterohexamer composed of two FlhC and four FlhD subunits. Each FlhC binds a FlhD dimer, forming a heterotrimer, and a hexamer assembles by dimerization of two heterotrimers.

The protein resides in the cytoplasm. Its function is as follows. Functions in complex with FlhC as a master transcriptional regulator that regulates transcription of several flagellar and non-flagellar operons by binding to their promoter region. Activates expression of class 2 flagellar genes, including fliA, which is a flagellum-specific sigma factor that turns on the class 3 genes. Also regulates genes whose products function in a variety of physiological pathways. The chain is Flagellar transcriptional regulator FlhD from Photorhabdus laumondii subsp. laumondii (strain DSM 15139 / CIP 105565 / TT01) (Photorhabdus luminescens subsp. laumondii).